The chain runs to 291 residues: Elongation factor Ts (291 aa).

The tract at residues 79 to 82 (TDFV) is involved in Mg(2+) ion dislocation from EF-Tu.

It belongs to the EF-Ts family.

It is found in the cytoplasm. Its function is as follows. Associates with the EF-Tu.GDP complex and induces the exchange of GDP to GTP. It remains bound to the aminoacyl-tRNA.EF-Tu.GTP complex up to the GTP hydrolysis stage on the ribosome. The sequence is that of Elongation factor Ts from Roseobacter denitrificans (strain ATCC 33942 / OCh 114) (Erythrobacter sp. (strain OCh 114)).